Consider the following 325-residue polypeptide: Tyrosine phosphatase H2 (325 aa).

In terms of domain architecture, Tyrosine-protein phosphatase spans 27–295 (VTREHEKIMA…FFCYRVMERY (269 aa)). The Phosphocysteine intermediate role is filled by C236.

The protein belongs to the protein-tyrosine phosphatase family.

The protein resides in the host cytoplasm. The enzyme catalyses O-phospho-L-tyrosyl-[protein] + H2O = L-tyrosyl-[protein] + phosphate. Suppresses host immune cell adhesion and phagocytosis. Triggers host mitochondrial membrane depolarization and caspase-dependent apoptosis. This Microplitis demolitor bracovirus (isolate Webb) (MdBV) protein is Tyrosine phosphatase H2 (H2).